The sequence spans 80 residues: Mitotic-spindle organizing protein 1 (80 aa).

This sequence belongs to the MOZART1 family. In terms of assembly, part of the gamma-tubulin complex.

Its subcellular location is the cytoplasm. The protein localises to the cytoskeleton. The protein resides in the microtubule organizing center. It is found in the spindle pole body. In terms of biological role, required for gamma-tubulin complex recruitment to the microtubule organizing center (MTOC). This chain is Mitotic-spindle organizing protein 1, found in Pyricularia oryzae (strain 70-15 / ATCC MYA-4617 / FGSC 8958) (Rice blast fungus).